The primary structure comprises 254 residues: MSLMILSVDGVEFAYKSRQILNNIKFEVKRGEVVSILGVNGAGKSTLLKCINKILKPKRGTILIDNFDIKNLDNLELAKKVGYVPQRAEGNYMTVFDAVLLGRKPHIKWEVSDRDIEITHKVLKLLNLEDYALRYTNELSGGELQKVIIARALVQEPQILLLDEPTNNLDLKNQLEVMKIIMDISKSQNIASIVVMHDLNLALRYSDKFIMLKDGVIYAEGGREVINPENIKAVYGVDAYIENVRGIPVVVPIG.

Residues leucine 6–alanine 239 enclose the ABC transporter domain. An ATP-binding site is contributed by glycine 38–serine 45.

Belongs to the ABC transporter superfamily.

This is an uncharacterized protein from Methanocaldococcus jannaschii (strain ATCC 43067 / DSM 2661 / JAL-1 / JCM 10045 / NBRC 100440) (Methanococcus jannaschii).